Here is a 1404-residue protein sequence, read N- to C-terminus: Proteoglycan 4 (1404 aa).

A signal peptide spans 1–24 (MAWKTLPIYLLLLLSVFVIQQVSS). 2 SMB domains span residues 26–69 (DLSS…AELS) and 66–108 (AELS…AEVH). Disulfide bonds link cysteine 30-cysteine 34, cysteine 30-cysteine 46, cysteine 34-cysteine 64, cysteine 44-cysteine 46, cysteine 44-cysteine 57, cysteine 50-cysteine 56, cysteine 57-cysteine 64, cysteine 70-cysteine 74, cysteine 70-cysteine 86, cysteine 74-cysteine 104, cysteine 84-cysteine 86, cysteine 84-cysteine 97, cysteine 90-cysteine 96, and cysteine 97-cysteine 104. Residues 111 to 966 (TSPPSSKKAP…TTQVTSTTTQ (856 aa)) form a disordered region. 2 O-linked (GalNAc...) serine glycosylation sites follow: serine 123 and serine 136. Over residues 132–146 (TTKRSPKPPNKKKTK) the composition is skewed to basic residues. Positions 166–177 (SSSSSSSSSSSS) are enriched in low complexity. A compositionally biased stretch (basic and acidic residues) spans 193 to 205 (ELQKKLKVKDNKK). A glycan (N-linked (GlcNAc...) asparagine) is linked at asparagine 206. The span at 235 to 252 (TPDTSTTQHNKVSTSPKI) shows a compositional bias: polar residues. Threonine 240 and threonine 253 each carry an O-linked (GalNAc...) threonine glycan. Residues 266 to 276 (PNSDTSKETSL) are compositionally biased toward polar residues. O-linked (GalNAc...) threonine glycans are attached at residues threonine 277, threonine 291, and threonine 305. Serine 306 is a glycosylation site (O-linked (GalNAc...) serine). The O-linked (GalNAc...) threonine glycan is linked to threonine 310. Residue serine 317 is glycosylated (O-linked (GalNAc...) serine). O-linked (GalNAc...) threonine glycans are attached at residues threonine 324, threonine 332, and threonine 338. Composition is skewed to low complexity over residues 329 to 348 (AKPT…TTPK) and 356 to 405 (KEPA…KEPA). Copy 1 of the repeat occupies 348 to 355 (KEPTPTTP). The 59 X 8 AA repeats of K-X-P-X-P-T-T-X stretch occupies residues 348-855 (KEPTPTTPKE…TPETPPPTTS (508 aa)). The stretch at 356 to 363 (KEPASTTP) is one 2; approximate repeat. Repeat 3 spans residues 364–371 (KEPTPTTI). Threonine 367 is a glycosylation site (O-linked (GalNAc...) threonine). A 4; approximate repeat occupies 372-378 (KSAPTTP). Serine 373 carries an O-linked (GalNAc...) serine glycan. 3 O-linked (GalNAc...) threonine glycosylation sites follow: threonine 376, threonine 384, and threonine 385. Repeat 5 spans residues 379–386 (KEPAPTTT). The stretch at 387 to 393 (KSAPTTP) is one 6; approximate repeat. Residue serine 388 is glycosylated (O-linked (GalNAc...) serine). 7 O-linked (GalNAc...) threonine glycosylation sites follow: threonine 391, threonine 399, threonine 400, threonine 407, threonine 408, threonine 415, and threonine 423. Tandem repeats lie at residues 394–401 (KEPAPTTT), 402–409 (KEPAPTTP), 410–417 (KEPAPTTT), and 418–425 (KEPAPTTT). Residues 413 to 431 (APTTTKEPAPTTTKSAPTT) are compositionally biased toward low complexity. One copy of the 11; approximate repeat lies at 426–432 (KSAPTTP). The O-linked (GalNAc...) serine glycan is linked to serine 427. O-linked (GalNAc...) threonine glycosylation is found at threonine 430, threonine 438, threonine 439, threonine 446, threonine 447, threonine 454, and threonine 455. Pro residues-rich tracts occupy residues 432 to 467 (PKEP…PKEP) and 476 to 506 (PTTP…PKEP). A run of 4 repeats spans residues 433 to 440 (KEPAPTTP), 441 to 448 (KKPAPTTP), 449 to 456 (KEPAPTTP), and 457 to 464 (KEPTPTTP). One copy of the 16; approximate repeat lies at 465 to 471 (KEPAPTT). The stretch at 472–479 (KEPAPTTP) is repeat 17. O-linked (GalNAc...) threonine glycans are attached at residues threonine 477, threonine 478, threonine 485, threonine 493, threonine 494, threonine 501, threonine 502, and threonine 509. The stretch at 480-487 (KEPAPTAP) is one 18; approximate repeat. Residues 488–495 (KKPAPTTP) form a 19; approximate repeat. 4 repeat units span residues 496–503 (KEPAPTTP), 504–511 (KEPAPTTT), 512–519 (KEPSPTTP), and 520–527 (KEPAPTTT). The segment covering 523 to 561 (APTTTKSAPTTTKEPAPTTTKSAPTTPKEPSPTTTKEPA) has biased composition (low complexity). O-linked (GalNAc...) threonine glycosylation occurs at threonine 525. Residues 528-534 (KSAPTTT) form a 24; approximate repeat. An O-linked (GalNAc...) serine glycan is attached at serine 529. Threonine 532, threonine 540, and threonine 541 each carry an O-linked (GalNAc...) threonine glycan. Copy 25 of the repeat occupies 535–542 (KEPAPTTT). One copy of the 26; approximate repeat lies at 543–549 (KSAPTTP). 6 consecutive repeat copies span residues 550 to 557 (KEPSPTTT), 558 to 565 (KEPAPTTP), 566 to 573 (KEPAPTTP), 574 to 581 (KKPAPTTP), 582 to 589 (KEPAPTTP), and 590 to 597 (KEPAPTTT). A glycan (O-linked (GalNAc...) serine) is linked at serine 553. O-linked (GalNAc...) threonine glycosylation is found at threonine 555, threonine 563, threonine 564, threonine 571, threonine 572, threonine 579, threonine 580, threonine 587, threonine 588, threonine 595, threonine 603, threonine 604, threonine 611, threonine 612, threonine 616, threonine 619, and threonine 627. Over residues 562–592 (PTTPKEPAPTTPKKPAPTTPKEPAPTTPKEP) the composition is skewed to pro residues. The 33; approximate repeat unit spans residues 598–605 (KKPAPTTP). Residues 602–611 (PTTPKEPAPT) show a composition bias toward pro residues. Copy 34 of the repeat occupies 606–613 (KEPAPTTP). A compositionally biased stretch (low complexity) spans 612 to 636 (TPKETAPTTPKKLTPTTPEKLAPTT). Residues 614–621 (KETAPTTP) form a 35; approximate repeat. The stretch at 622–629 (KKLTPTTP) is one 36; approximate repeat. A 37; approximate repeat occupies 638–645 (EKPAPTTP). Over residues 653–667 (PEEPTPTTPEEPAPT) the composition is skewed to pro residues. The 38; approximate repeat unit spans residues 662–669 (EEPAPTTP). Residues threonine 676, threonine 683, threonine 684, threonine 691, threonine 692, threonine 699, threonine 700, threonine 704, and threonine 707 are each glycosylated (O-linked (GalNAc...) threonine). The span at 677–699 (PKEPAPTTPKEPAPTTPKEPAPT) shows a compositional bias: pro residues. Repeat copies occupy residues 678-685 (KEPAPTTP), 686-693 (KEPAPTTP), and 694-701 (KEPAPTTP). Residues 700 to 721 (TPKETAPTTPKGTAPTTLKEPA) show a composition bias toward low complexity. A 42; approximate repeat occupies 702-709 (KETAPTTP). The stretch at 710-717 (KGTAPTTL) is one 43; approximate repeat. Residues 718 to 725 (KEPAPTTP) form repeat 44. O-linked (GalNAc...) threonine glycans are attached at residues threonine 723, threonine 724, and threonine 736. Residues 728–761 (PAPKELAPTTTKEPTSTTSDKPAPTTPKGTAPTT) are compositionally biased toward low complexity. A 45; approximate repeat occupies 731–738 (KELAPTTT). A 46; approximate repeat occupies 739–746 (KEPTSTTS). A 47; approximate repeat occupies 747–754 (DKPAPTTP). The 48; approximate repeat unit spans residues 755–762 (KGTAPTTP). The segment covering 762–776 (PKEPAPTTPKEPAPT) has biased composition (pro residues). Repeat copies occupy residues 763–770 (KEPAPTTP) and 771–778 (KEPAPTTP). Residues threonine 768, threonine 769, threonine 776, and threonine 777 are each glycosylated (O-linked (GalNAc...) threonine). A compositionally biased stretch (low complexity) spans 777–790 (TPKGTAPTTLKEPA). A 51; approximate repeat occupies 779–786 (KGTAPTTL). Copy 52 of the repeat occupies 787 to 794 (KEPAPTTP). O-linked (GalNAc...) threonine glycosylation is found at threonine 792, threonine 793, and threonine 805. Positions 797 to 830 (PAPKELAPTTTKGPTSTTSDKPAPTTPKETAPTT) are enriched in low complexity. A 53; approximate repeat occupies 800–807 (KELAPTTT). A 54; approximate repeat occupies 808–815 (KGPTSTTS). The O-linked (GalNAc...) serine glycan is linked to serine 812. One copy of the 55; approximate repeat lies at 816-823 (DKPAPTTP). A 56; approximate repeat occupies 824–831 (KETAPTTP). O-linked (GalNAc...) threonine glycans are attached at residues threonine 829, threonine 837, and threonine 838. Residues 831–853 (PKEPAPTTPKKPAPTTPETPPPT) show a composition bias toward pro residues. A run of 2 repeats spans residues 832–839 (KEPAPTTP) and 840–847 (KKPAPTTP). One copy of the 59; approximate repeat lies at 848 to 855 (ETPPPTTS). Over residues 854–866 (TSEVSTPTTTKEP) the composition is skewed to low complexity. A glycan (O-linked (GalNAc...) serine) is linked at serine 892. The span at 899-914 (PTTKTPAATKPEMTTT) shows a compositional bias: low complexity. Threonine 900 is a glycosylation site (O-linked (GalNAc...) threonine). Residues 915–926 (AKDKTTERDLRT) are compositionally biased toward basic and acidic residues. Over residues 927–966 (TPETTTAAPKMTKETATTTEKTTESKITATTTQVTSTTTQ) the composition is skewed to low complexity. O-linked (GalNAc...) threonine glycosylation is found at threonine 930 and threonine 931. O-linked (GalNAc...) serine glycosylation occurs at serine 962. O-linked (GalNAc...) threonine glycosylation is found at threonine 963, threonine 968, threonine 975, threonine 978, threonine 979, and threonine 980. A disordered region spans residues 992 to 1104 (ITTTEIMNKP…EDAGGAEGET (113 aa)). Positions 999 to 1012 (NKPEETAKPKDRAT) are enriched in basic and acidic residues. Positions 1026-1047 (KAPKKPTSTKKPKTMPRVRKPK) are enriched in basic residues. Threonine 1039 carries an O-linked (GalNAc...) threonine glycan. Low complexity predominate over residues 1048-1060 (TTPTPRKMTSTMP). A compositionally biased stretch (polar residues) spans 1073-1085 (LQTTTRPNQTPNS). An intrachain disulfide couples cysteine 1146 to cysteine 1403. Hemopexin repeat units lie at residues 1148 to 1191 (GKPV…VWGI) and 1192 to 1239 (PSPI…FGGL). The N-linked (GlcNAc...) asparagine glycan is linked to asparagine 1159. Residue threonine 1161 is glycosylated (O-linked (GalNAc...) threonine).

In terms of assembly, homodimer; disulfide-linked. N-glycosylated. Post-translationally, O-glycosylated; contains glycosaminoglycan chondroitin sulfate and keratan sulfate. O-glycosylated with sialylated oligosaccharides which are predominantly represented by the monosialylated core type I structure, NeuNAcalpha2-3Galbeta1-3GalNAc, with smaller amounts of disialylated O-glycans. In terms of processing, the disulfide bond between Cys-1146 and Cys-1403 is essential for protein cleavage. Proteolytically cleaved by cathepsin CTSG. Highly expressed in synovial tissue, cartilage and liver and weakly in heart and lung. Isoform B is expressed in kidney, lung, liver, heart and brain. Isoform C and isoform D are widely expressed.

Its subcellular location is the secreted. Its function is as follows. Plays a role in boundary lubrication within articulating joints. Prevents protein deposition onto cartilage from synovial fluid by controlling adhesion-dependent synovial growth and inhibiting the adhesion of synovial cells to the cartilage surface. Functionally, isoform F plays a role as a growth factor acting on the primitive cells of both hematopoietic and endothelial cell lineages. In Homo sapiens (Human), this protein is Proteoglycan 4 (PRG4).